We begin with the raw amino-acid sequence, 245 residues long: DNA polymerase III subunit epsilon (245 aa).

A divalent metal cation contacts are provided by Asp-11 and Glu-13. Residues Asp-11, Glu-13, Gln-60, and His-65 each coordinate substrate. Residue His-161 is the Proton acceptor of the active site. Position 166 (Asp-166) interacts with a divalent metal cation. Asp-166 is a substrate binding site.

The DNA polymerase holoenzyme is a complex that contains 10 different types of subunits. These subunits are organized into 3 functionally essential subassemblies: the pol III core, the beta sliding clamp processivity factor and the clamp-loading complex. The pol III core (subunits alpha,epsilon and theta) contains the polymerase and the 3'-5' exonuclease proofreading activities. The polymerase is tethered to the template via the sliding clamp processivity factor. The clamp-loading complex assembles the beta processivity factor onto the primer template and plays a central role in the organization and communication at the replication fork. This complex contains delta, delta', psi and chi, and copies of either or both of two different DnaX proteins, gamma and tau. The composition of the holoenzyme is, therefore: (alpha,epsilon,theta)[2]-(gamma/tau)[3]-delta,delta', psi,chi-beta[4]. It depends on Mg(2+) as a cofactor. Requires Mn(2+) as cofactor.

The enzyme catalyses DNA(n) + a 2'-deoxyribonucleoside 5'-triphosphate = DNA(n+1) + diphosphate. DNA polymerase III is a complex, multichain enzyme responsible for most of the replicative synthesis in bacteria. The epsilon subunit contain the editing function and is a proofreading 3'-5' exonuclease. This Buchnera aphidicola subsp. Baizongia pistaciae (strain Bp) protein is DNA polymerase III subunit epsilon (dnaQ).